The chain runs to 336 residues: MAFNIHNRNLLSLEHHTTRELRYLLDLSRDLKRAKYTGTEQQHLKGNNIALIFEKTSTRTRCAFEVAAYDQGANVTYIDPNSSQIGHKESMKDTARVLGRMYDAIEYRGFKQEIVEELAKFAGVPVFNGLTDEYHPTQMIADVLTMREHSDKPLHDISYAYLGDARNNMGNSLLLIGAKLGMDVRIAAPKALWPHDDLVERCKQYAEESGARITLTEDPKAAVKGVDFVHTDVWVSMGEPIEAWGERIKQLKPYQVNAELMKSTGNPRTKFMHCLPAFHNSETKVGKQIAEQYPDLANGIEVTDDVFESPACIAFEQAENRMHTIKAILVSTLADL.

Residues 57-60 (STRT), Gln84, Arg108, and 135-138 (HPTQ) contribute to the carbamoyl phosphate site. L-ornithine is bound by residues Asn168, Asp232, and 236–237 (SM). Carbamoyl phosphate is bound by residues 274–275 (CL) and Arg321.

This sequence belongs to the aspartate/ornithine carbamoyltransferase superfamily. OTCase family.

The protein resides in the cytoplasm. It carries out the reaction carbamoyl phosphate + L-ornithine = L-citrulline + phosphate + H(+). Its pathway is amino-acid degradation; L-arginine degradation via ADI pathway; carbamoyl phosphate from L-arginine: step 2/2. Functionally, reversibly catalyzes the transfer of the carbamoyl group from carbamoyl phosphate (CP) to the N(epsilon) atom of ornithine (ORN) to produce L-citrulline. This chain is Ornithine carbamoyltransferase, catabolic (arcB), found in Pseudomonas putida (strain ATCC 47054 / DSM 6125 / CFBP 8728 / NCIMB 11950 / KT2440).